We begin with the raw amino-acid sequence, 76 residues long: U1-cyrtautoxin-As1d (76 aa).

4 cysteine pairs are disulfide-bonded: C23–C37, C30–C51, C36–C66, and C69–C76.

It belongs to the neurotoxin 21 family. As to expression, expressed by the venom gland.

The protein localises to the secreted. Neurotoxin with probable ion channel impairing activity. In vivo, is both paralytic and lethal, when injected into lepidopteran larvae. In Apomastus schlingeri (Trap-door spider), this protein is U1-cyrtautoxin-As1d.